Consider the following 200-residue polypeptide: Signal peptidase complex catalytic subunit SEC11 (200 aa).

Residues 1-14 (MFAELAPYLSNPRQ) are Cytoplasmic-facing. A helical; Signal-anchor for type II membrane protein membrane pass occupies residues 15–33 (TLAQILNFALVLSTAFMGW). Over 34–200 (KALSVYTNSP…MGVMVMLQRE (167 aa)) the chain is Lumenal. Residues serine 53 and histidine 92 each act as charge relay system in the active site. The disordered stretch occupies residues 101-129 (GDGGNKSQRRLEREADKPSGPGLSSPLSH). N-linked (GlcNAc...) asparagine glycosylation occurs at asparagine 105. A compositionally biased stretch (low complexity) spans 118 to 128 (PSGPGLSSPLS). Aspartate 142 functions as the Charge relay system in the catalytic mechanism. Positions 186 to 197 (VLLGIMGVMVML) are C-terminal short (CTS) helix.

It belongs to the peptidase S26B family. In terms of assembly, component of the signal peptidase complex (SPC) composed of a catalytic subunit SEC11 and three accessory subunits SPC1, SPC2 and SPC3. The complex induces a local thinning of the ER membrane which is used to measure the length of the signal peptide (SP) h-region of protein substrates. This ensures the selectivity of the complex towards h-regions shorter than 18-20 amino acids. SPC associates with the translocon complex.

The protein resides in the endoplasmic reticulum membrane. The enzyme catalyses Cleavage of hydrophobic, N-terminal signal or leader sequences from secreted and periplasmic proteins.. Functionally, catalytic component of the signal peptidase complex (SPC) which catalyzes the cleavage of N-terminal signal sequences from nascent proteins as they are translocated into the lumen of the endoplasmic reticulum. Specifically cleaves N-terminal signal peptides that contain a hydrophobic alpha-helix (h-region) shorter than 18-20 amino acids. This chain is Signal peptidase complex catalytic subunit SEC11 (SEC11), found in Arthroderma otae (strain ATCC MYA-4605 / CBS 113480) (Microsporum canis).